Reading from the N-terminus, the 673-residue chain is Annexin A6 (673 aa).

Ala-2 is modified (N-acetylalanine). Ser-13 carries the post-translational modification Phosphoserine. Annexin repeat units follow at residues 20-91 (FDPN…GLMR), 92-163 (PPAY…VLLQ), 175-247 (DLVQ…AVVK), 251-322 (STPE…KLSG), 363-434 (FNPD…GLMM), 435-506 (PPAH…SLAT), 521-595 (EDAQ…AIVQ), and 599-670 (NKPL…ALCG). Tyr-30 carries the post-translational modification Phosphotyrosine. N6-acetyllysine occurs at positions 63, 68, 75, and 81. Phosphotyrosine is present on Tyr-201. An N6-acetyllysine mark is found at Lys-306, Lys-370, and Lys-418. A Phosphoserine modification is found at Ser-422. The residue at position 483 (Lys-483) is an N6-acetyllysine. The residue at position 537 (Ser-537) is a Phosphoserine. Lys-620 bears the N6-acetyllysine mark.

The protein belongs to the annexin family. Phosphorylated in response to growth factor stimulation.

The protein resides in the cytoplasm. It localises to the melanosome. Functionally, may associate with CD21. May regulate the release of Ca(2+) from intracellular stores. This is Annexin A6 (ANXA6) from Homo sapiens (Human).